Consider the following 386-residue polypeptide: SET and MYND domain-containing protein DDB_G0273589 (386 aa).

The SET domain maps to 6 to 294; it reads NGLELKSSEN…KGDQLTISYI (289 aa). An MYND-type zinc finger spans residues 51-94; sequence CFNCIKQLPSVIKLSLKCNQCNEIWYCNEQCKNENINKHQHYEC. Positions 136 to 171 form a coiled coil; that stretch reads NNKFIEQQLNNNNNNNNDNEQLTNTLDDVFDLVENQ.

This sequence belongs to the class V-like SAM-binding methyltransferase superfamily.

Functionally, probable methyltransferase. This is SET and MYND domain-containing protein DDB_G0273589 from Dictyostelium discoideum (Social amoeba).